Here is a 262-residue protein sequence, read N- to C-terminus: UPF0758 protein BTH_I0781 (262 aa).

Residues 1–45 form a disordered region; the sequence is MQYEIVSAGENVGDEPERERPVAQAAAAPGIPRPAALPAAGAARR. Positions 22–43 are enriched in low complexity; it reads VAQAAAAPGIPRPAALPAAGAA. The MPN domain maps to 140-262; it reads LVDSPGAVDD…TFSFAQAGWI (123 aa). The Zn(2+) site is built by His211, His213, and Asp224. Residues 211–224 carry the JAMM motif motif; it reads HNHPSGAVRPSAAD.

This sequence belongs to the UPF0758 family.

The sequence is that of UPF0758 protein BTH_I0781 from Burkholderia thailandensis (strain ATCC 700388 / DSM 13276 / CCUG 48851 / CIP 106301 / E264).